The sequence spans 256 residues: Enolase-phosphatase E1 (256 aa).

Residues Asp14 and Glu16 each coordinate Mg(2+). Residues 142 to 143 and Lys176 contribute to the substrate site; that span reads SS. Residue Asp201 coordinates Mg(2+).

Belongs to the HAD-like hydrolase superfamily. MasA/MtnC family. Monomer. It depends on Mg(2+) as a cofactor.

Its subcellular location is the cytoplasm. It is found in the nucleus. The enzyme catalyses 5-methylsulfanyl-2,3-dioxopentyl phosphate + H2O = 1,2-dihydroxy-5-(methylsulfanyl)pent-1-en-3-one + phosphate. The protein operates within amino-acid biosynthesis; L-methionine biosynthesis via salvage pathway; L-methionine from S-methyl-5-thio-alpha-D-ribose 1-phosphate: step 3/6. It functions in the pathway amino-acid biosynthesis; L-methionine biosynthesis via salvage pathway; L-methionine from S-methyl-5-thio-alpha-D-ribose 1-phosphate: step 4/6. Its function is as follows. Bifunctional enzyme that catalyzes the enolization of 2,3-diketo-5-methylthiopentyl-1-phosphate (DK-MTP-1-P) into the intermediate 2-hydroxy-3-keto-5-methylthiopentenyl-1-phosphate (HK-MTPenyl-1-P), which is then dephosphorylated to form the acireductone 1,2-dihydroxy-3-keto-5-methylthiopentene (DHK-MTPene). The chain is Enolase-phosphatase E1 from Drosophila sechellia (Fruit fly).